A 61-amino-acid chain; its full sequence is Type IV secretion system protein PtlI homolog (61 aa).

The first 25 residues, 1–25 (MIHAHSNARLLRWAILAIAPATLGA), serve as a signal peptide directing secretion. The disordered stretch occupies residues 29–61 (NGPPGLPYPDGKPLIPINTAAPEQGSSCQTRAP). Residues 52-61 (QGSSCQTRAP) are compositionally biased toward polar residues.

This is Type IV secretion system protein PtlI homolog (ptlI) from Bordetella bronchiseptica (strain ATCC BAA-588 / NCTC 13252 / RB50) (Alcaligenes bronchisepticus).